The chain runs to 238 residues: MRPADRQADQVRPITITRHYTKHAEGSVLVEFGDTKVLCNATVEEGVPRFLKGQGQGWVTAEYGMLPRATNSRNAREAARGKQTGRTMEIQRLIARSLRAAVDLKALGEFTITVDCDVIQADGGTRTASISGACVALVDALNKMVTEGKLKKSPLKSMVAAVSVGIVDGQPLCDLEYVEDSAAETDMNVVMIDDGRMIEVQGTAEGAPFSHEELLALLALAKGGLEKIFEAQKEALKQ.

Phosphate contacts are provided by residues arginine 86 and 124–126; that span reads GTR.

Belongs to the RNase PH family. Homohexameric ring arranged as a trimer of dimers.

The enzyme catalyses tRNA(n+1) + phosphate = tRNA(n) + a ribonucleoside 5'-diphosphate. In terms of biological role, phosphorolytic 3'-5' exoribonuclease that plays an important role in tRNA 3'-end maturation. Removes nucleotide residues following the 3'-CCA terminus of tRNAs; can also add nucleotides to the ends of RNA molecules by using nucleoside diphosphates as substrates, but this may not be physiologically important. Probably plays a role in initiation of 16S rRNA degradation (leading to ribosome degradation) during starvation. The sequence is that of Ribonuclease PH from Proteus mirabilis (strain HI4320).